A 411-amino-acid polypeptide reads, in one-letter code: ATP-dependent RNA helicase eIF4A (411 aa).

The disordered stretch occupies residues 1-23 (MSKPEDTSAAAAAPAGEAGNNLN). Positions 9-19 (AAAAAPAGEAG) are enriched in low complexity. The Q motif signature appears at 38–66 (DNFDNMELKEELLRGVYAYGFERPSAIQA). Residues 69 to 239 (IVPVIKGHDV…KKFMRDPIRI (171 aa)) form the Helicase ATP-binding domain. 82–89 (AQSGTGKT) is an ATP binding site. Positions 187–190 (DEAD) match the DEAD box motif. A Helicase C-terminal domain is found at 250–411 (GIKQFYVAVE…EMPLNVADLI (162 aa)).

This sequence belongs to the DEAD box helicase family. eIF4A subfamily. As to quaternary structure, component of the eIF4F complex, which composition varies with external and internal environmental conditions. It is composed of at least eIF4A, eIF4E and eIF4G.

The protein localises to the cytoplasm. It carries out the reaction ATP + H2O = ADP + phosphate + H(+). In terms of biological role, ATP-dependent RNA helicase which is a subunit of the eIF4F complex involved in cap recognition and is required for mRNA binding to ribosome. In the current model of translation initiation, eIF4A unwinds RNA secondary structures in the 5'-UTR of mRNAs which is necessary to allow efficient binding of the small ribosomal subunit, and subsequent scanning for the initiator codon. The polypeptide is ATP-dependent RNA helicase eIF4A (TIF1) (Mycosarcoma maydis (Corn smut fungus)).